Reading from the N-terminus, the 240-residue chain is Ribonuclease 3 (240 aa).

In terms of domain architecture, RNase III spans 9 to 141 (VEEFQKKTGI…LLAAIYLDQG (133 aa)). E54 provides a ligand contact to Mg(2+). Residue D58 is part of the active site. Residues D127 and E130 each contribute to the Mg(2+) site. E130 is a catalytic residue. Residues 168–237 (DYKTALQEIV…ARIAYEKLLK (70 aa)) enclose the DRBM domain.

The protein belongs to the ribonuclease III family. Homodimer. Requires Mg(2+) as cofactor.

It is found in the cytoplasm. The enzyme catalyses Endonucleolytic cleavage to 5'-phosphomonoester.. Functionally, digests double-stranded RNA. Involved in the processing of primary rRNA transcript to yield the immediate precursors to the large and small rRNAs (23S and 16S). Processes some mRNAs, and tRNAs when they are encoded in the rRNA operon. Processes pre-crRNA and tracrRNA of type II CRISPR loci if present in the organism. This chain is Ribonuclease 3, found in Thermotoga sp. (strain RQ2).